Reading from the N-terminus, the 37-residue chain is Cytochrome b6-f complex subunit 5 (37 aa).

The chain crosses the membrane as a helical span at residues 5 to 25 (FLFGIVLGLIPITLAGLFVTA).

It belongs to the PetG family. In terms of assembly, the 4 large subunits of the cytochrome b6-f complex are cytochrome b6, subunit IV (17 kDa polypeptide, PetD), cytochrome f and the Rieske protein, while the 4 small subunits are PetG, PetL, PetM and PetN. The complex functions as a dimer.

It localises to the plastid. The protein resides in the chloroplast thylakoid membrane. Functionally, component of the cytochrome b6-f complex, which mediates electron transfer between photosystem II (PSII) and photosystem I (PSI), cyclic electron flow around PSI, and state transitions. PetG is required for either the stability or assembly of the cytochrome b6-f complex. The polypeptide is Cytochrome b6-f complex subunit 5 (Platanus occidentalis (Sycamore)).